Consider the following 1080-residue polypeptide: Ubiquitin carboxyl-terminal hydrolase 8 (1080 aa).

Residues 33–116 (TKNYIHSAQK…ESLKLRYEEA (84 aa)) form the MIT domain. The span at 119–173 (RKQLEEKDRREEEQLQQQKRQEMGREDSGAAAKRSVENLLDSKTKTQRINGEKSE) shows a compositional bias: basic and acidic residues. The disordered stretch occupies residues 119–176 (RKQLEEKDRREEEQLQQQKRQEMGREDSGAAAKRSVENLLDSKTKTQRINGEKSEGAA). S160 carries the phosphoserine modification. The region spanning 195–313 (KNTSLIIMDA…WLLCYPQFTT (119 aa)) is the Rhodanese domain. Residues 379–393 (ALAGPGAAPRAEASP) show a composition bias toward low complexity. Disordered stretches follow at residues 379–455 (ALAG…TDEE), 468–605 (EKNK…RSEE), and 642–710 (PPEM…KPPC). At S392 the chain carries Phosphoserine. The SH3-binding motif lies at 405–413 (PQVDRTKKP). Positions 417–427 (LPEDHRIKSEN) are enriched in basic and acidic residues. The residue at position 446 (S446) is a Phosphoserine. Composition is skewed to basic and acidic residues over residues 468-535 (EKNK…RELS), 549-577 (SKSE…KRPA), and 593-605 (AQRE…RSEE). Phosphothreonine is present on T569. Positions 678–688 (SYSSPDITQAL) are enriched in polar residues. S680 and S681 each carry phosphoserine. The USP domain occupies 739–1071 (TGLRNLGNTC…AAYILFYTSL (333 aa)). The active-site Nucleophile is C748. A Phosphothreonine modification is found at T907. H1029 functions as the Proton acceptor in the catalytic mechanism.

It belongs to the peptidase C19 family. Forms a ternary complex with RNF128 and OTUB1. Interacts (via C-terminal UCH catalytic domain) with OTUB1 isoform 1. Interacts with STAM2 (via SH3 domain). Interacts with DNAJB3, EGFR, EPS15, RASGRF1, RNF41, YWHAE, YWHAG and YWHAZ. Interacts with NBR1, RASGRF1, RNF41 and IST1. Associates with the ESCRT-0 complex and with microtubules. Interacts with BIRC6/bruce and KIF23/MKLP1. In terms of processing, phosphorylation of Ser-680 is essential for interaction with YWHAE and for cytosol localization. Undergoes dephosphorylation at Ser-680 in the M phase. Tyrosine-phosphorylated in its N-terminal half in an EGFR-dependent manner. Ubiquitinated. Inactive form is mostly monoubiquitinated, but polyubiquitination happens too. Ubiquitination is increased in EGF-stimulated cells. Ubiquitination of active form is undetectable, suggesting a possibility that USP8 deubiquitinates itself, thereby regulating its own function. Highly expressed in testis. Expressed at intermediate level in brain.

It is found in the cytoplasm. It localises to the nucleus. The protein localises to the endosome membrane. The protein resides in the cell membrane. The catalysed reaction is Thiol-dependent hydrolysis of ester, thioester, amide, peptide and isopeptide bonds formed by the C-terminal Gly of ubiquitin (a 76-residue protein attached to proteins as an intracellular targeting signal).. Its function is as follows. Hydrolase that can remove conjugated ubiquitin from proteins and therefore plays an important regulatory role at the level of protein turnover by preventing degradation. Converts both 'Lys-48' an 'Lys-63'-linked ubiquitin chains. Catalytic activity is enhanced in the M phase. Involved in cell proliferation. Required to enter into S phase in response to serum stimulation. May regulate T-cell anergy mediated by RNF128 via the formation of a complex containing RNF128 and OTUB1. Probably regulates the stability of STAM2 and RASGRF1. Regulates endosomal ubiquitin dynamics, cargo sorting, membrane traffic at early endosomes, and maintenance of ESCRT-0 stability. The level of protein ubiquitination on endosomes is essential for maintaining the morphology of the organelle. Deubiquitinates EPS15 and controls tyrosine kinase stability. Removes conjugated ubiquitin from EGFR thus regulating EGFR degradation and downstream MAPK signaling. Involved in acrosome biogenesis through interaction with the spermatid ESCRT-0 complex and microtubules. Deubiquitinates BIRC6/bruce and KIF23/MKLP1. Deubiquitinates BACE1 which inhibits BACE1 lysosomal degradation and modulates BACE-mediated APP cleavage and amyloid-beta formation. The polypeptide is Ubiquitin carboxyl-terminal hydrolase 8 (Mus musculus (Mouse)).